Consider the following 220-residue polypeptide: Deoxyribose-phosphate aldolase (220 aa).

D89 (proton donor/acceptor) is an active-site residue. Residue K151 is the Schiff-base intermediate with acetaldehyde of the active site. K180 serves as the catalytic Proton donor/acceptor.

Belongs to the DeoC/FbaB aldolase family. DeoC type 1 subfamily.

It is found in the cytoplasm. It carries out the reaction 2-deoxy-D-ribose 5-phosphate = D-glyceraldehyde 3-phosphate + acetaldehyde. It participates in carbohydrate degradation; 2-deoxy-D-ribose 1-phosphate degradation; D-glyceraldehyde 3-phosphate and acetaldehyde from 2-deoxy-alpha-D-ribose 1-phosphate: step 2/2. Functionally, catalyzes a reversible aldol reaction between acetaldehyde and D-glyceraldehyde 3-phosphate to generate 2-deoxy-D-ribose 5-phosphate. The sequence is that of Deoxyribose-phosphate aldolase from Staphylococcus haemolyticus (strain JCSC1435).